A 313-amino-acid chain; its full sequence is NF-kappa-B inhibitor delta (313 aa).

ANK repeat units lie at residues 48 to 83, 84 to 113, 117 to 146, 152 to 201, 206 to 236, and 243 to 276; these read EGDT…IREH, KGKT…EPNA, QGRS…QVDL, EGLT…NHTS, SNKT…DLRT, and HGNT…DPTL.

The protein belongs to the NF-kappa-B inhibitor family. In terms of assembly, interacts with NFKB1, RELA and RELB; in the nucleus.

The protein localises to the nucleus. In terms of biological role, regulates the expression of IL-2, IL-6, and other cytokines through regulation on NF-kappa-B activity. Functions in the regulation of inflammatory responses. Involved in the induction of T helper 17 cells (Th17) differentiation upon recognition of antigen by T cell antigen receptor (TCR). May also regulate TCR-induced negative selection of thymocytes. This is NF-kappa-B inhibitor delta (NFKBID) from Homo sapiens (Human).